The chain runs to 88 residues: DNA-directed RNA polymerase subunit omega (88 aa).

It belongs to the RNA polymerase subunit omega family. The RNAP catalytic core consists of 2 alpha, 1 beta, 1 beta' and 1 omega subunit. When a sigma factor is associated with the core the holoenzyme is formed, which can initiate transcription.

The enzyme catalyses RNA(n) + a ribonucleoside 5'-triphosphate = RNA(n+1) + diphosphate. Its function is as follows. Promotes RNA polymerase assembly. Latches the N- and C-terminal regions of the beta' subunit thereby facilitating its interaction with the beta and alpha subunits. In Yersinia pestis (strain Pestoides F), this protein is DNA-directed RNA polymerase subunit omega.